Consider the following 408-residue polypeptide: uncharacterized protein (408 aa).

Residues E35, D61, and N96 each coordinate a divalent metal cation.

It belongs to the metallophosphoesterase superfamily. A divalent metal cation serves as cofactor.

This is an uncharacterized protein from Bacillus subtilis (strain 168).